A 239-amino-acid chain; its full sequence is MLLQPAPCAPSAGFPRPLAAPGAMHGSQKDTTFTKIFVGGLPYHTTDASLRKYFEGFGDIEEAVVITDRQTGKSRGYGFVTMADRAAAERACKDPNPIIDGRKANVNLAYLGAKPRSLQTGFAIGVQQLHPTLIQRTYGLTPHYIYPPAIVQPSVVIPAAPVPSLSSPYIEYTPASPAYAQYPPATYDQYPYAASPATAASFVGYSYPAAVPQALSAAAPAGTTFVQYQAPQLQPDRMQ.

Positions 34–111 constitute an RRM domain; that stretch reads TKIFVGGLPY…RKANVNLAYL (78 aa).

The protein belongs to the RBM38 family.

It localises to the cytoplasm. It is found in the cytosol. Its subcellular location is the nucleus. Its function is as follows. RNA-binding protein that specifically bind the 3'-UTR of CDKN1A transcripts, leading to maintain the stability of CDKN1A transcripts, thereby acting as a mediator of the p53/TP53 family to regulate CDKN1A. CDKN1A is a cyclin-dependent kinase inhibitor transcriptionally regulated by the p53/TP53 family to induce cell cycle arrest. Isoform 1, but not isoform 2, has the ability to induce cell cycle arrest in G1 and maintain the stability of CDKN1A transcripts induced by p53/TP53. Also acts as a mRNA splicing factor. Specifically regulates the expression of FGFR2-IIIb, an epithelial cell-specific isoform of FGFR2. Plays a role in myogenic differentiation. Functionally, (Microbial infection) Essential factor for the splicing of the pre-mRNAs of human parvovirus B19 (B19V) and for the expression of B19V 11-kDa protein, which enhances viral replication. This Homo sapiens (Human) protein is RNA-binding protein 38 (RBM38).